The following is a 977-amino-acid chain: Dynamin-like GTPase OPA1, mitochondrial (977 aa).

A mitochondrion-targeting transit peptide spans 1-86 (MWRTKAAAAC…VKYGYQSYRN (86 aa)). The Mitochondrial matrix portion of the chain corresponds to 87–95 (FWLARLASR). A helical transmembrane segment spans residues 96–112 (LLKIRYLILGSAVGGGY). Residues 113–787 (TAKKTYDQWE…SVIEDMVGPD (675 aa)) are Mitochondrial intermembrane-facing. Residues 224-271 (KKVSDKEKIDQLQEELLRTQLKYQRMLERLEKENKELRKLVLQRDDKG) are a coiled coil. The Dynamin-type G domain maps to 302–578 (QDHLPRVVVV…FWKMVRESVE (277 aa)). A G1 motif region spans residues 312–319 (GDQSAGKT). Residues Ser315, Gly317, Lys318, Thr319, Ser320, and Gly334 each contribute to the GTP site. Thr319 contacts Mg(2+). The tract at residues 338–341 (MMTR) is G2 motif. Mg(2+) is bound by residues Thr340 and Asp415. The interval 415–418 (DLPG) is G3 motif. Residues 484–487 (TKVD) are G4 motif. 3 residues coordinate GTP: Lys485, Asp487, and Thr520. Residues 518 to 521 (VVTG) are G5 motif. Stalk region stretches follow at residues 606–853 (DRNE…IKDT) and 891–945 (CNDI…VKLL). Residues 753-873 (SDKQQWDAAI…KTALNHCNLC (121 aa)) form a paddle region region. Residues 788-798 (WKKRWLYWISR) lie within the membrane without spanning it. Residues 799–977 (TKEQNIRNET…AFIEALHQEK (179 aa)) lie on the Mitochondrial intermembrane side of the membrane. Cys873 and Cys891 are oxidised to a cystine. Positions 911–977 (LRQQLTNTEV…AFIEALHQEK (67 aa)) form a coiled coil.

Belongs to the TRAFAC class dynamin-like GTPase superfamily. Dynamin/Fzo/YdjA family. Oligomeric complex consisting of membrane-bound and soluble forms of OPA1. Cleaved by OMA1 or YME1L downstream of the transmembrane region in response to different signals to generate soluble forms. Cleaved by OMA1 at position S1 following stress conditions, generating the short soluble form (Dynamin-like GTPase OPA1, short form; S-OPA1).

It localises to the mitochondrion inner membrane. The protein localises to the mitochondrion intermembrane space. It carries out the reaction GTP + H2O = GDP + phosphate + H(+). Dynamin-related GTPase that is essential for normal mitochondrial morphology by mediating fusion of the mitochondrial inner membranes, regulating cristae morphology and maintaining respiratory chain function. Exists in two forms: the transmembrane, long form (Dynamin-like GTPase OPA1, long form; L-OPA1), which is tethered to the inner mitochondrial membrane, and the short soluble form (Dynamin-like GTPase OPA1, short form; S-OPA1), which results from proteolytic cleavage and localizes in the intermembrane space. Both forms (L-OPA1 and S-OPA1) cooperate to catalyze the fusion of the mitochondrial inner membrane. The equilibrium between L-OPA1 and S-OPA1 is essential: excess levels of S-OPA1, produced by cleavage by OMA1 following loss of mitochondrial membrane potential, lead to an impaired equilibrium between L-OPA1 and S-OPA1, inhibiting mitochondrial fusion. The balance between L-OPA1 and S-OPA1 also influences cristae shape and morphology. Its role in mitochondrial morphology is required for mitochondrial genome maintenance. Functionally, constitutes the transmembrane long form (L-OPA1) that plays a central role in mitochondrial inner membrane fusion and cristae morphology. L-OPA1 and the soluble short form (S-OPA1) form higher-order helical assemblies that coordinate the fusion of mitochondrial inner membranes. Inner membrane-anchored L-OPA1 molecules initiate membrane remodeling by recruiting soluble S-OPA1 to rapidly polymerize into a flexible cylindrical scaffold encaging the mitochondrial inner membrane. Once at the membrane surface, the formation of S-OPA1 helices induce bilayer curvature. OPA1 dimerization through the paddle region, which inserts into cardiolipin-containing membrane, promotes GTP hydrolysis and the helical assembly of a flexible OPA1 lattice on the membrane, which drives membrane curvature and mitochondrial fusion. Plays a role in the maintenance and remodeling of mitochondrial cristae, some invaginations of the mitochondrial inner membrane that provide an increase in the surface area. Probably acts by forming helical filaments at the inside of inner membrane tubes with the shape and dimensions of crista junctions. Its function is as follows. Constitutes the soluble short form (S-OPA1) generated by cleavage by OMA1, which plays a central role in mitochondrial inner membrane fusion and cristae morphology. The transmembrane long form (L-OPA1) and the S-OPA1 form higher-order helical assemblies that coordinate the fusion of mitochondrial inner membranes. Inner membrane-anchored L-OPA1 molecules initiate membrane remodeling by recruiting soluble S-OPA1 to rapidly polymerize into a flexible cylindrical scaffold encaging the mitochondrial inner membrane. Once at the membrane surface, the formation of S-OPA1 helices induce bilayer curvature. OPA1 dimerization through the paddle region, which inserts into cardiolipin-containing membrane, promotes GTP hydrolysis and the helical assembly of a flexible OPA1 lattice on the membrane, which drives membrane curvature and mitochondrial fusion. Excess levels of S-OPA1 produced by cleavage by OMA1 following stress conditions that induce loss of mitochondrial membrane potential, lead to an impaired equilibrium between L-OPA1 and S-OPA1, thereby inhibiting mitochondrial fusion. Plays a role in the maintenance and remodeling of mitochondrial cristae, some invaginations of the mitochondrial inner membrane that provide an increase in the surface area. Probably acts by forming helical filaments at the inside of inner membrane tubes with the shape and dimensions of crista junctions. The protein is Dynamin-like GTPase OPA1, mitochondrial of Gallus gallus (Chicken).